Here is a 309-residue protein sequence, read N- to C-terminus: MRENNQSSTLEFILLGVTGQQEQEDFFYILFLFIYPITLIGNLLIVLAICSDVRLHNPMYFLLANLSLVDIFFSSVTIPKMLANHLLGSKSISFGGCLTQMYFMIALGNTDSYILAAMAYDRAVAISRPLHYTTIMSPRSCIWLIAGSWVIGNANALPHTLLTASLSFCGNQEVANFYCDITPLLKLSCSDIHFHVKMMYLGVGIFSVPLLCIIVSYIRVFSTVFQVPSTKGVLKAFSTCGSHLTVVSLYYGTVMGTYFRPLTNYSLKDAVITVMYTAVTPMLNPFIYSLRNRDMKAALRKLFNKRISS.

Over 1 to 25 the chain is Extracellular; it reads MRENNQSSTLEFILLGVTGQQEQED. N-linked (GlcNAc...) asparagine glycosylation occurs at asparagine 5. Residues 26-49 form a helical membrane-spanning segment; that stretch reads FFYILFLFIYPITLIGNLLIVLAI. Topologically, residues 50-57 are cytoplasmic; sequence CSDVRLHN. The chain crosses the membrane as a helical span at residues 58–79; that stretch reads PMYFLLANLSLVDIFFSSVTIP. The Extracellular portion of the chain corresponds to 80–100; the sequence is KMLANHLLGSKSISFGGCLTQ. Cysteine 97 and cysteine 189 are joined by a disulfide. The chain crosses the membrane as a helical span at residues 101–120; sequence MYFMIALGNTDSYILAAMAY. At 121–139 the chain is on the cytoplasmic side; that stretch reads DRAVAISRPLHYTTIMSPR. The helical transmembrane segment at 140–158 threads the bilayer; that stretch reads SCIWLIAGSWVIGNANALP. Residues 159–195 are Extracellular-facing; sequence HTLLTASLSFCGNQEVANFYCDITPLLKLSCSDIHFH. Residues 196–218 traverse the membrane as a helical segment; that stretch reads VKMMYLGVGIFSVPLLCIIVSYI. Residues 219-235 are Cytoplasmic-facing; the sequence is RVFSTVFQVPSTKGVLK. The chain crosses the membrane as a helical span at residues 236 to 258; the sequence is AFSTCGSHLTVVSLYYGTVMGTY. Topologically, residues 259 to 270 are extracellular; it reads FRPLTNYSLKDA. N-linked (GlcNAc...) asparagine glycosylation occurs at asparagine 264. The helical transmembrane segment at 271 to 290 threads the bilayer; that stretch reads VITVMYTAVTPMLNPFIYSL. Over 291–309 the chain is Cytoplasmic; sequence RNRDMKAALRKLFNKRISS.

It belongs to the G-protein coupled receptor 1 family.

It localises to the cell membrane. Its function is as follows. Odorant receptor. The polypeptide is Olfactory receptor 1A1 (OR1A1) (Homo sapiens (Human)).